The chain runs to 620 residues: Endoglucanase 21 (620 aa).

The tract at residues 1 to 39 (MYGRDPWGGPLEINAADSMTDDDRSRNLQDLDRATPSRP) is disordered. Over 1-70 (MYGRDPWGGP…DLGCILVSRK (70 aa)) the chain is Cytoplasmic. The segment covering 21–39 (DDDRSRNLQDLDRATPSRP) has biased composition (basic and acidic residues). A helical; Signal-anchor for type II membrane protein membrane pass occupies residues 71–91 (IFLWTLGTIVVTALLSGFITL). Over 92–620 (IVKTLPHHHH…TPPPPAPWTP (529 aa)) the chain is Extracellular. N-linked (GlcNAc...) asparagine glycosylation is found at asparagine 108 and asparagine 134. Aspartate 166 acts as the Nucleophile in catalysis. N-linked (GlcNAc...) asparagine glycans are attached at residues asparagine 217, asparagine 325, asparagine 346, asparagine 409, asparagine 426, and asparagine 482. Catalysis depends on residues histidine 514 and aspartate 561. N-linked (GlcNAc...) asparagine glycosylation occurs at asparagine 567. The active site involves glutamate 570.

Belongs to the glycosyl hydrolase 9 (cellulase E) family. Expressed in conductive tissues of young roots, cotyledons, rosette leaves, cauline leaves and sepals. Expressed in the leaf trichome support cells.

It is found in the cell membrane. It carries out the reaction Endohydrolysis of (1-&gt;4)-beta-D-glucosidic linkages in cellulose, lichenin and cereal beta-D-glucans.. This chain is Endoglucanase 21 (KOR3), found in Arabidopsis thaliana (Mouse-ear cress).